We begin with the raw amino-acid sequence, 304 residues long: D-alanine--D-alanine ligase (304 aa).

The region spanning 99–293 (KKILRYEGIE…YSKLLDMIIE (195 aa)) is the ATP-grasp domain. 126 to 181 (LDKLGFPLVVKPNSGGSSVGVKIVYDKDELISMLETVFEWDSEVVIEKYIKGEEIT) contributes to the ATP binding site. Asp-248, Glu-260, and Asn-262 together coordinate Mg(2+).

This sequence belongs to the D-alanine--D-alanine ligase family. Requires Mg(2+) as cofactor. Mn(2+) serves as cofactor.

It localises to the cytoplasm. It carries out the reaction 2 D-alanine + ATP = D-alanyl-D-alanine + ADP + phosphate + H(+). The protein operates within cell wall biogenesis; peptidoglycan biosynthesis. Its function is as follows. Cell wall formation. In Bacillus anthracis (strain A0248), this protein is D-alanine--D-alanine ligase.